A 196-amino-acid chain; its full sequence is Carnitine operon protein CaiE (196 aa).

The segment at 173 to 196 (TQPLRQMEENRPRLQGTTDVTPKR) is disordered. The segment covering 187–196 (QGTTDVTPKR) has biased composition (polar residues).

The protein belongs to the transferase hexapeptide repeat family.

The protein operates within amine and polyamine metabolism; carnitine metabolism. Its function is as follows. Overproduction of CaiE stimulates the activity of CaiB and CaiD. This is Carnitine operon protein CaiE from Escherichia coli O139:H28 (strain E24377A / ETEC).